A 144-amino-acid polypeptide reads, in one-letter code: Cytochrome c3 (144 aa).

Residues 1–24 (MRYLVISLFAVSLLMAGSALVGNA) form the signal peptide. Positions 51, 54, 59, 62, 63, 64, 76, 81, 82, 100, 108, 111, 112, 125, 128, and 129 each coordinate heme c.

This sequence belongs to the cytochrome c family. As to quaternary structure, homodimer. Heterotrimer of cytochrome c3 FDH2C and formate dehydrogenase FDH2 alpha and beta subunits that forms the FdhABC(3) complex. In terms of processing, binds 4 heme c groups per subunit.

It localises to the periplasm. In terms of biological role, participates in sulfate respiration coupled with phosphorylation by transferring electrons from the enzyme dehydrogenase to ferredoxin. Gamma chain of the formate dehydrogenase (FDH) that catalyzes the reversible two-electron oxidation of formate to carbon dioxide. The gamma subunit of formate dehydrogenase forms a c-type heme. The chain is Cytochrome c3 from Nitratidesulfovibrio vulgaris (strain ATCC 29579 / DSM 644 / CCUG 34227 / NCIMB 8303 / VKM B-1760 / Hildenborough) (Desulfovibrio vulgaris).